Here is an 859-residue protein sequence, read N- to C-terminus: MRRGPRVALVLGLLRIYLAQANFAPHFFDNGVGSTNGNMALFSLPEDTPVGSHVYTLNGTDPEGDPISYHISFDPSTRSVFSVDPNFGNITLVEELDREREDEIEAIISISDGLNLVAEKVVILVTDANDEAPRFIQEPYIIRVPENIPAGSSIFKVQAEDKDTGSGGSVTYSLQNLHSSKFSMDRHSGVLRLQAGATLDYEKSRAHYITVIAKDGGGRLRGADMVFSATTTVTINVEDVQDTAPIFVGTPYYGYVYEDTLPGSEVLTVVAIDGDRGKPNHILYRLLNESDGIFEINETSGAISVLQSPALLRREVYELHVQVTEVNSPGSPAAQATVPVTIRIVDLNNHPPTFYGESGPQNKFELSMFEHPPQGEILRGLKITVNDSDQGANAKFNLRLVGPGGIFRVVPQTVLNEAQVTIIVENSAAIDFEKSKLLTFKLLAIEVNTPEKFSSTADIVIQLLDTNDNVPKFTSHYYIARIPENAPGGSNVVAVTAVDPDTGPWGKVHYSIYGTGSDLFLIHPSTGLIYTQPWASLDAEGTSRYNFYVKAEDMDGRYSLAEVFVTLLDVNDHYPQFVQSVQEKTMVLGTPLKIEATDQDAEEPNNLVDYSITRAEPVNVFDIDAHTGEIRLKNSIRSLEALHNITPSGDYSWSLQVQAKDRGSPSFSTTALLKIDITDTERLSRGSMAAFLIQTKDNPMKAVGVLAGVMAIVVAITVLISTATFWRNKKSNKVLPVRRVLRRRPSPAPHTVRIEWLKFRRAKAATKFILKEDSPNENCNNSRVGVMVPPRAPALPPPPKMASSMVAQQTVPTVSGSLTPQPSPQLPTPKTLGGPVQSSLVSELKQKFEKKSLDNKAYI.

An N-terminal signal peptide occupies residues 1–21; the sequence is MRRGPRVALVLGLLRIYLAQA. At 22–701 the chain is on the extracellular side; sequence NFAPHFFDNG…LIQTKDNPMK (680 aa). Cadherin domains are found at residues 36-135, 136-247, 248-354, 360-473, 474-577, and 569-691; these read NGNM…APRF, IQEP…APIF, VGTP…PPTF, PQNK…VPKF, TSHY…YPQF, and DVND…MAAF. Residues Asn-58 and Asn-89 are each glycosylated (N-linked (GlcNAc...) asparagine). Asn-288 is a glycosylation site (N-linked (GlcNAc...) asparagine). A helical membrane pass occupies residues 702–722; it reads AVGVLAGVMAIVVAITVLIST. Topologically, residues 723-859 are cytoplasmic; the sequence is ATFWRNKKSN…KKSLDNKAYI (137 aa). Residues 793–838 form a disordered region; sequence PALPPPPKMASSMVAQQTVPTVSGSLTPQPSPQLPTPKTLGGPVQS. Positions 805–816 are enriched in polar residues; the sequence is MVAQQTVPTVSG.

In terms of assembly, interacts with PROM1. Post-translationally, undergoes proteolytic cleavage; produces a soluble 95 kDa N-terminal fragment and a 25 kDa cell-associated C-terminal fragment. In terms of tissue distribution, expressed in cone and rod photoreceptor cells (at protein level). Expressed in photoreceptor cells of the outer nuclear layer of the retina. Expressed in mitral and tufted cells in the olfactory bulb.

Its subcellular location is the cell membrane. In terms of biological role, potential calcium-dependent cell-adhesion protein. May be required for the structural integrity of the outer segment (OS) of photoreceptor cells. The polypeptide is Cadherin-related family member 1 (Cdhr1) (Mus musculus (Mouse)).